The sequence spans 677 residues: Zinc finger and BTB domain-containing protein 5 (677 aa).

The 70-residue stretch at 24 to 93 folds into the BTB domain; it reads CDCVIVVGNR…MYTSTLMLGE (70 aa). Residues 158-181 are compositionally biased toward polar residues; that stretch reads LNSSQNGEEQPAPMSSSMRSNLDQ. Disordered stretches follow at residues 158–252 and 287–312; these read LNSS…MTDN and SMAS…SFQC. At S234 the chain carries Phosphoserine. A Glycyl lysine isopeptide (Lys-Gly) (interchain with G-Cter in SUMO2) cross-link involves residue K239. Over residues 287–300 the composition is skewed to polar residues; sequence SMASRATQVETSFD. Glycyl lysine isopeptide (Lys-Gly) (interchain with G-Cter in SUMO2) cross-links involve residues K322 and K330. A disordered region spans residues 331–387; that stretch reads SEPLSSPEPQDEVSDVTSQAEGSESVEVEGVVVSAEKIDLSPESSDRSFSDPQSSTD. Positions 350–365 are enriched in low complexity; it reads AEGSESVEVEGVVVSA. The segment covering 366-379 has biased composition (basic and acidic residues); the sequence is EKIDLSPESSDRSF. Position 371 is a phosphoserine (S371). Residues K404 and K415 each participate in a glycyl lysine isopeptide (Lys-Gly) (interchain with G-Cter in SUMO2) cross-link. The segment at 447-474 is disordered; that stretch reads LLSPEAGPAGGPSSAPGSHVENPFSEPA. Residues 449–464 are compositionally biased toward low complexity; the sequence is SPEAGPAGGPSSAPGS. A Glycyl lysine isopeptide (Lys-Gly) (interchain with G-Cter in SUMO2) cross-link involves residue K541. The span at 552–576 shows a compositional bias: polar residues; sequence QIPENSTSSQLMMNGATSSFENGHP. Residues 552 to 585 are disordered; the sequence is QIPENSTSSQLMMNGATSSFENGHPSQPGPPQLT. Glycyl lysine isopeptide (Lys-Gly) (interchain with G-Cter in SUMO2) cross-links involve residues K594 and K597. The C2H2-type 1 zinc-finger motif lies at 613 to 635; that stretch reads YACKICCKTFLTLTDCKKHIRVH. The C2H2-type 2; atypical zinc finger occupies 641–664; sequence YACLKCGKRFSQSSHLYKHSKTTC. Glycyl lysine isopeptide (Lys-Gly) (interchain with G-Cter in SUMO2) cross-links involve residues K645 and K658.

The protein localises to the nucleus. Its function is as follows. May be involved in transcriptional regulation. This chain is Zinc finger and BTB domain-containing protein 5 (ZBTB5), found in Homo sapiens (Human).